Reading from the N-terminus, the 156-residue chain is MTKKVGIVDTTFARVDMASIAIKKLKELSPNIKIIRKTVPGIKDLPVACKKLLEEEGCDIVMALGMPGKAEKDKVCAHEASLGLMLAQLMTNKHIIEVFVHEDEAKDDKELDWLAKRRAEEHAENVYYLLFKPEYLTRMAGKGLRQGFEDAGPARE.

This sequence belongs to the DMRL synthase family.

It carries out the reaction 2 6,7-dimethyl-8-(1-D-ribityl)lumazine + H(+) = 5-amino-6-(D-ribitylamino)uracil + riboflavin. It participates in cofactor biosynthesis; riboflavin biosynthesis; riboflavin from 2-hydroxy-3-oxobutyl phosphate and 5-amino-6-(D-ribitylamino)uracil: step 2/2. This chain is Riboflavin synthase (ribC), found in Methanocaldococcus jannaschii (strain ATCC 43067 / DSM 2661 / JAL-1 / JCM 10045 / NBRC 100440) (Methanococcus jannaschii).